The following is a 429-amino-acid chain: UDP-N-acetylglucosamine 1-carboxyvinyltransferase (429 aa).

Residue Lys22–Asn23 participates in phosphoenolpyruvate binding. A UDP-N-acetyl-alpha-D-glucosamine-binding site is contributed by Arg102. The Proton donor role is filled by Cys126. Cys126 carries the 2-(S-cysteinyl)pyruvic acid O-phosphothioketal modification. UDP-N-acetyl-alpha-D-glucosamine-binding positions include Arg131–Leu135, Asp316, and Ile338.

The protein belongs to the EPSP synthase family. MurA subfamily.

The protein resides in the cytoplasm. It carries out the reaction phosphoenolpyruvate + UDP-N-acetyl-alpha-D-glucosamine = UDP-N-acetyl-3-O-(1-carboxyvinyl)-alpha-D-glucosamine + phosphate. It functions in the pathway cell wall biogenesis; peptidoglycan biosynthesis. In terms of biological role, cell wall formation. Adds enolpyruvyl to UDP-N-acetylglucosamine. This chain is UDP-N-acetylglucosamine 1-carboxyvinyltransferase, found in Nitrobacter winogradskyi (strain ATCC 25391 / DSM 10237 / CIP 104748 / NCIMB 11846 / Nb-255).